A 159-amino-acid polypeptide reads, in one-letter code: Protein Smg homolog (159 aa).

It belongs to the Smg family.

The chain is Protein Smg homolog from Dichelobacter nodosus (strain VCS1703A).